The chain runs to 646 residues: Calcium-dependent protein kinase 2 (646 aa).

Gly2 is lipidated: N-myristoyl glycine. Cys5 is lipidated: S-palmitoyl cysteine. Residues 27-169 (RIGAEQASSS…HMRRVSSAGL (143 aa)) are disordered. Over residues 32 to 43 (QASSSSHGNGQV) the composition is skewed to polar residues. Composition is skewed to basic and acidic residues over residues 73–119 (PETK…KREV) and 126–157 (AKPETKSESKPETTKPETTSETKPETKAEPQK). In terms of domain architecture, Protein kinase spans 186-444 (YSLGRKLGQG…AHQVLCHPWV (259 aa)). Residues 192 to 200 (LGQGQFGTT) and Lys215 contribute to the ATP site. Asp310 functions as the Proton acceptor in the catalytic mechanism. The residue at position 350 (Ser350) is a Phosphoserine. The autoinhibitory domain stretch occupies residues 450–480 (APDKPLDSAVLSRMKQFSAMNKFKKMALRVI). EF-hand domains follow at residues 487-522 (EEIAGLKQMFKMIDADNSGQITFEELKAGLKRVGAN), 523-558 (LKESEILDLMQAADVDNSGTIDYKEFIAATLHLNKI), 559-592 (EREDHLFAAFSYFDKDESGFITPDELQQACEEFG), and 593-628 (VEDARIEEMMRDVDQDKDGRIDYNEFVAMMQKGSIM). Residues Asp500, Asp502, Ser504, Gln506, Glu511, Asp536, Asp538, Ser540, Thr542, Glu547, Asp572, Asp574, Ser576, Glu583, Asp606, Asp608, Asp610, Arg612, and Glu617 each contribute to the Ca(2+) site.

It belongs to the protein kinase superfamily. Ser/Thr protein kinase family. CDPK subfamily. Interacts with 14-3-3 proteins.

It localises to the endoplasmic reticulum membrane. It catalyses the reaction L-seryl-[protein] + ATP = O-phospho-L-seryl-[protein] + ADP + H(+). It carries out the reaction L-threonyl-[protein] + ATP = O-phospho-L-threonyl-[protein] + ADP + H(+). Activated by calcium. Autophosphorylation may play an important role in the regulation of the kinase activity. Its function is as follows. May play a role in signal transduction pathways that involve calcium as a second messenger. The protein is Calcium-dependent protein kinase 2 (CPK2) of Arabidopsis thaliana (Mouse-ear cress).